Here is a 402-residue protein sequence, read N- to C-terminus: Non-structural protein 3 (402 aa).

The 69-residue stretch at 334–402 (PDILVTLNDY…AYDILDQLGI (69 aa)) folds into the DRBM domain.

Belongs to the rotavirus NSP3 family.

It is found in the host cytoplasm. Its function is as follows. May play a role in stimulating the translation of viral mRNAs. The polypeptide is Non-structural protein 3 (Rotavirus C (isolate RVC/Human/United Kingdom/Bristol/1989) (RV-C)).